We begin with the raw amino-acid sequence, 179 residues long: Large ribosomal subunit protein bL9 (179 aa).

The segment at 155–179 (KPEEAPVPVAEEPTAETEQAEVAAE) is disordered. A compositionally biased stretch (acidic residues) spans 167–179 (PTAETEQAEVAAE).

The protein belongs to the bacterial ribosomal protein bL9 family.

Binds to the 23S rRNA. This chain is Large ribosomal subunit protein bL9, found in Porphyromonas gingivalis (strain ATCC BAA-308 / W83).